The following is a 121-amino-acid chain: Alpha-endosulfine (121 aa).

The segment at 1–53 (MSQKQEEENPAEETGEEKQDTQEKEGILPERAEEAKLKAKYPSLGQKPGGSDF) is disordered. S2 bears the N-acetylserine mark. S2 is subject to Phosphoserine. A compositionally biased stretch (basic and acidic residues) spans 16-37 (EEKQDTQEKEGILPERAEEAKL). T21 carries the phosphothreonine modification. S43 is subject to Phosphoserine. Residue S67 is modified to Phosphoserine; by GWL. Residues 79–121 (NKQLPSAGPDKNLVTGDHIPTPQDLPQRKSSLVTSKLAGGQVE) are disordered. A Phosphoserine; by PKA modification is found at S109.

The protein belongs to the endosulfine family. In terms of assembly, interacts (when phosphorylated at Ser-67) with PPP2R2D. Interacts with ABCC8. Interacts with SNCA; interaction is disrupted when phosphorylated at Ser-109. In terms of processing, phosphorylation at Ser-67 by GWL during mitosis is essential for interaction with PPP2R2D (PR55-delta) and subsequent inactivation of PP2A. Phosphorylated by PKA. In terms of tissue distribution, widely expressed with high levels in skeletal muscle and brain and lower levels in the pancreas.

It is found in the cytoplasm. In terms of biological role, protein phosphatase inhibitor that specifically inhibits protein phosphatase 2A (PP2A) during mitosis. When phosphorylated at Ser-67 during mitosis, specifically interacts with PPP2R2D (PR55-delta) and inhibits its activity, leading to inactivation of PP2A, an essential condition to keep cyclin-B1-CDK1 activity high during M phase. Also acts as a stimulator of insulin secretion by interacting with sulfonylurea receptor (ABCC8), thereby preventing sulfonylurea from binding to its receptor and reducing K(ATP) channel currents. This chain is Alpha-endosulfine (ENSA), found in Homo sapiens (Human).